The chain runs to 99 residues: Protein AC150 (99 aa).

Positions 38–96 constitute a Chitin-binding type-2 domain; the sequence is GFSCYNKPIGVNFPHPTRCDAFYMCVGLNQKLELICPEGFEFDPDVKNCVPISDYGCTA. Cysteine 73 and cysteine 86 are oxidised to a cystine.

It is found in the host nucleus. It localises to the virion. In terms of biological role, plays a role in primary oral infection of the host. The polypeptide is Protein AC150 (Autographa californica nuclear polyhedrosis virus (AcMNPV)).